A 43-amino-acid chain; its full sequence is Protein PsbN (43 aa).

Residues 7–27 (VAIFISGLLVSFTGYALYTAF) form a helical membrane-spanning segment.

Belongs to the PsbN family.

It is found in the plastid. The protein resides in the chloroplast thylakoid membrane. In terms of biological role, may play a role in photosystem I and II biogenesis. The chain is Protein PsbN from Sagittaria latifolia (Broadleaf arrowhead).